Here is a 260-residue protein sequence, read N- to C-terminus: Ribosome maturation factor RimP (260 aa).

Composition is skewed to basic and acidic residues over residues 189-199 (RRGRDAEREQL) and 215-227 (AREM…PRKE). Residues 189–260 (RRGRDAEREQ…QTTSDPHQGE (72 aa)) form a disordered region. The span at 228-242 (KTAKKPLPKNTKAHR) shows a compositional bias: basic residues.

The protein belongs to the RimP family.

Its subcellular location is the cytoplasm. Functionally, required for maturation of 30S ribosomal subunits. The chain is Ribosome maturation factor RimP from Afipia carboxidovorans (strain ATCC 49405 / DSM 1227 / KCTC 32145 / OM5) (Oligotropha carboxidovorans).